The chain runs to 567 residues: TGF-beta receptor type-2 (567 aa).

A signal peptide spans 1-22; it reads MGRGLLRGLWPLHIVLWTRIAS. Residues 23 to 166 lie on the Extracellular side of the membrane; sequence TIPPHVQKSV…NPDLLLVIFQ (144 aa). 6 cysteine pairs are disulfide-bonded: Cys51–Cys84, Cys54–Cys71, Cys61–Cys67, Cys77–Cys101, Cys121–Cys136, and Cys138–Cys143. Residues Asn70 and Asn94 are each glycosylated (N-linked (GlcNAc...) asparagine). N-linked (GlcNAc...) asparagine glycosylation is present at Asn154. A helical membrane pass occupies residues 167-187; it reads VTGISLLPPLGVAISVIIIFY. The Cytoplasmic segment spans residues 188 to 567; sequence CYRVNRQQKL…PEDGSLNTTK (380 aa). The 301-residue stretch at 244 to 544 folds into the Protein kinase domain; the sequence is IELDTLVGKG…AERFSELEHL (301 aa). Residues 250-258 and Lys277 each bind ATP; that span reads VGKGRFAEV. Asp379 serves as the catalytic Proton acceptor. 3 positions are modified to phosphoserine: Ser409, Ser548, and Ser553. Positions 439 to 567 are sufficient for interaction with CLU; that stretch reads VESFKQTDVY…PEDGSLNTTK (129 aa).

It belongs to the protein kinase superfamily. TKL Ser/Thr protein kinase family. TGFB receptor subfamily. As to quaternary structure, homodimer. Heterohexamer; TGFB1, TGFB2 and TGFB3 homodimeric ligands assemble a functional receptor composed of two TGFBR1 and TGFBR2 heterodimers to form a ligand-receptor heterohexamer. The respective affinity of TGFRB1 and TGFRB2 for the ligands may modulate the kinetics of assembly of the receptor and may explain the different biological activities of TGFB1, TGFB2 and TGFB3. Component of a complex composed of TSC22D1 (via N-terminus), TGFBR1 and TGFBR2; the interaction between TSC22D1 and TGFBR1 is inhibited by SMAD7 and promoted by TGFB1. Interacts with DAXX. Interacts with DYNLT4. Interacts with ZFYVE9; ZFYVE9 recruits SMAD2 and SMAD3 to the TGF-beta receptor. Interacts with and is activated by SCUBE3; this interaction does not affect TGFB1-binding to TGFBR2. Interacts with VPS39; this interaction is independent of the receptor kinase activity and of the presence of TGF-beta. Interacts with CLU. In terms of assembly, homodimer; disulfide-linked. The cofactor is Mg(2+). Mn(2+) is required as a cofactor. In terms of processing, phosphorylated on a Ser/Thr residue in the cytoplasmic domain.

The protein localises to the cell membrane. Its subcellular location is the membrane raft. The protein resides in the secreted. The enzyme catalyses L-threonyl-[receptor-protein] + ATP = O-phospho-L-threonyl-[receptor-protein] + ADP + H(+). It carries out the reaction L-seryl-[receptor-protein] + ATP = O-phospho-L-seryl-[receptor-protein] + ADP + H(+). In terms of biological role, transmembrane serine/threonine kinase forming with the TGF-beta type I serine/threonine kinase receptor, TGFBR1, the non-promiscuous receptor for the TGF-beta cytokines TGFB1, TGFB2 and TGFB3. Transduces the TGFB1, TGFB2 and TGFB3 signal from the cell surface to the cytoplasm and thus regulates a plethora of physiological and pathological processes including cell cycle arrest in epithelial and hematopoietic cells, control of mesenchymal cell proliferation and differentiation, wound healing, extracellular matrix production, immunosuppression and carcinogenesis. The formation of the receptor complex composed of 2 TGFBR1 and 2 TGFBR2 molecules symmetrically bound to the cytokine dimer results in the phosphorylation and activation of TGFBR1 by the constitutively active TGFBR2. Activated TGFBR1 phosphorylates SMAD2 which dissociates from the receptor and interacts with SMAD4. The SMAD2-SMAD4 complex is subsequently translocated to the nucleus where it modulates the transcription of the TGF-beta-regulated genes. This constitutes the canonical SMAD-dependent TGF-beta signaling cascade. Also involved in non-canonical, SMAD-independent TGF-beta signaling pathways. Has transforming growth factor beta-activated receptor activity. Its function is as follows. Binds TGFB1, TGFB2 and TGFB3 in the picomolar affinity range without the participation of additional receptors. Blocks activation of SMAD2 and SMAD3 by TGFB1. The chain is TGF-beta receptor type-2 (TGFBR2) from Homo sapiens (Human).